The chain runs to 216 residues: Adenylate kinase (216 aa).

10-15 contributes to the ATP binding site; that stretch reads GAGKGT. Residues 30–59 form an NMP region; sequence STGDMFRAAMKAETEMGLQAKSFIDKGALV. AMP contacts are provided by residues Thr-31, Arg-36, 57–59, 85–88, and Gln-92; these read ALV and GFPR. The tract at residues 126 to 163 is LID; it reads GRRICKECGATYHLEFNAPAKADVCDKCGGELYQRSDD. Position 127 (Arg-127) interacts with ATP. Zn(2+)-binding residues include Cys-130 and Cys-133. Residue 136 to 137 coordinates ATP; that stretch reads TY. Zn(2+) contacts are provided by Cys-150 and Cys-153. Arg-160 and Arg-171 together coordinate AMP. An ATP-binding site is contributed by Gln-199.

Belongs to the adenylate kinase family. Monomer.

It localises to the cytoplasm. It catalyses the reaction AMP + ATP = 2 ADP. It participates in purine metabolism; AMP biosynthesis via salvage pathway; AMP from ADP: step 1/1. Functionally, catalyzes the reversible transfer of the terminal phosphate group between ATP and AMP. Plays an important role in cellular energy homeostasis and in adenine nucleotide metabolism. In Bacillus anthracis (strain A0248), this protein is Adenylate kinase.